The sequence spans 235 residues: Urease accessory protein UreF (235 aa).

Belongs to the UreF family. In terms of assembly, ureD, UreF and UreG form a complex that acts as a GTP-hydrolysis-dependent molecular chaperone, activating the urease apoprotein by helping to assemble the nickel containing metallocenter of UreC. The UreE protein probably delivers the nickel.

It is found in the cytoplasm. In terms of biological role, required for maturation of urease via the functional incorporation of the urease nickel metallocenter. The chain is Urease accessory protein UreF from Haemophilus influenzae (strain 86-028NP).